The following is a 426-amino-acid chain: Glutamate-1-semialdehyde 2,1-aminomutase (426 aa).

Residue Lys-265 is modified to N6-(pyridoxal phosphate)lysine.

This sequence belongs to the class-III pyridoxal-phosphate-dependent aminotransferase family. HemL subfamily. In terms of assembly, homodimer. It depends on pyridoxal 5'-phosphate as a cofactor.

It localises to the cytoplasm. The enzyme catalyses (S)-4-amino-5-oxopentanoate = 5-aminolevulinate. The protein operates within porphyrin-containing compound metabolism; protoporphyrin-IX biosynthesis; 5-aminolevulinate from L-glutamyl-tRNA(Glu): step 2/2. This Halorhodospira halophila (strain DSM 244 / SL1) (Ectothiorhodospira halophila (strain DSM 244 / SL1)) protein is Glutamate-1-semialdehyde 2,1-aminomutase.